Consider the following 840-residue polypeptide: Kinesin-like protein KIN-14J (840 aa).

A disordered region spans residues 1-74 (MEADPAPSST…KGEEPVVSAE (74 aa)). In terms of domain architecture, Kinesin motor spans 177–501 (NIRVFCRCRP…LNFASRVRAI (325 aa)). 260 to 267 (GQTGTGKT) is an ATP binding site. The stretch at 517-594 (KLKQMTEKIR…KKAARDTARS (78 aa)) forms a coiled coil. Over residues 581-593 (LANEKKAARDTAR) the composition is skewed to basic and acidic residues. The disordered stretch occupies residues 581–617 (LANEKKAARDTARSTKPPLAPMRQRPPLGRIGNHIPP).

This sequence belongs to the TRAFAC class myosin-kinesin ATPase superfamily. Kinesin family. KIN-14 subfamily.

The chain is Kinesin-like protein KIN-14J from Oryza sativa subsp. japonica (Rice).